A 166-amino-acid polypeptide reads, in one-letter code: Putative universal stress protein SA1532 (166 aa).

It belongs to the universal stress protein A family.

Its subcellular location is the cytoplasm. The polypeptide is Putative universal stress protein SA1532 (Staphylococcus aureus (strain N315)).